We begin with the raw amino-acid sequence, 41 residues long: Large ribosomal subunit protein bL36 (41 aa).

It belongs to the bacterial ribosomal protein bL36 family.

The protein is Large ribosomal subunit protein bL36 of Rickettsia canadensis (strain McKiel).